A 447-amino-acid chain; its full sequence is Phosphoglucosamine mutase (447 aa).

S88 acts as the Phosphoserine intermediate in catalysis. Mg(2+) is bound by residues S88, D231, D233, and D235. The residue at position 88 (S88) is a Phosphoserine.

The protein belongs to the phosphohexose mutase family. In terms of assembly, monomer. Also forms large aggregates. It depends on Mg(2+) as a cofactor. Activated by phosphorylation. Glucose-1,6-bisphosphate or fructose-1,6-bisphosphate can activate the enzyme in vitro. However, since glucose-1,6-bisphosphate is not believed to form in methanogens, the physiologically relevant activator might be a serine kinase protein.

It catalyses the reaction alpha-D-glucosamine 1-phosphate = D-glucosamine 6-phosphate. Functionally, catalyzes the conversion of glucosamine-6-phosphate to glucosamine-1-phosphate. Also catalyzes the isomerization of glucose-1-phosphate to glucose-6-phosphate, but at a 5-fold lower rate. This is Phosphoglucosamine mutase (glmM) from Methanococcus maripaludis (strain DSM 14266 / JCM 13030 / NBRC 101832 / S2 / LL).